Consider the following 60-residue polypeptide: Conotoxin VnMRCL-012 (60 aa).

Residues 1-22 (MRCLPVFVILLLLIASAPGVDA) form the signal peptide. Residues 23–50 (QPKTKYDVPLASRHDFAKKTPKRLSKPR) constitute a propeptide that is removed on maturation.

Belongs to the conotoxin T superfamily. In terms of processing, contains 2 disulfide bonds that can be either 'C1-C3, C2-C4' or 'C1-C4, C2-C3', since these disulfide connectivities have been observed for conotoxins with cysteine framework V (for examples, see AC P0DQQ7 and AC P81755). As to expression, expressed by the venom duct.

Its subcellular location is the secreted. This is Conotoxin VnMRCL-012 from Conus ventricosus (Mediterranean cone).